A 238-amino-acid polypeptide reads, in one-letter code: Deoxyribose-phosphate aldolase (238 aa).

The active-site Proton donor/acceptor is the Asp-104. Lys-168 serves as the catalytic Schiff-base intermediate with acetaldehyde. The Proton donor/acceptor role is filled by Lys-197.

It belongs to the DeoC/FbaB aldolase family. DeoC type 1 subfamily.

Its subcellular location is the cytoplasm. The catalysed reaction is 2-deoxy-D-ribose 5-phosphate = D-glyceraldehyde 3-phosphate + acetaldehyde. Its pathway is carbohydrate degradation; 2-deoxy-D-ribose 1-phosphate degradation; D-glyceraldehyde 3-phosphate and acetaldehyde from 2-deoxy-alpha-D-ribose 1-phosphate: step 2/2. Functionally, catalyzes a reversible aldol reaction between acetaldehyde and D-glyceraldehyde 3-phosphate to generate 2-deoxy-D-ribose 5-phosphate. The polypeptide is Deoxyribose-phosphate aldolase (Bacteroides thetaiotaomicron (strain ATCC 29148 / DSM 2079 / JCM 5827 / CCUG 10774 / NCTC 10582 / VPI-5482 / E50)).